The primary structure comprises 481 residues: F-box/FBD/LRR-repeat protein At5g18770 (481 aa).

An F-box domain is found at 23–69 (EDMISALPDHLLCHILIFLSTDESVLTSVLSSRWRNLWKWVPRLDLN). 7 LRR repeats span residues 126-153 (KPNVRHFQVESDLLEHWCTSEIRLTLSA), 159-185 (CLKLHLVWLNDFESLSLPCLKIMYLED), 186-211 (VVFPSDAAAETLISCSPVLEDLKLSL), 214-234 (DDVVVVLRVYSQSLKSFTLKR), 236-261 (VPVYAINGAHTVLVDTPRLVYMSLID), 289-314 (DELSERNIVYDLLNNFSGVRNMTISW), and 340-368 (ATMSSDASLEVLRIVLESCPKLKHFHFTL). One can recognise an FBD domain in the interval 378–430 (VITGFSRVLPRCLVFSLESVEMESPITEKATELKLVRYFLENSATLKKLVLLL).

The polypeptide is F-box/FBD/LRR-repeat protein At5g18770 (Arabidopsis thaliana (Mouse-ear cress)).